The primary structure comprises 420 residues: MSEKYWNIASHYFAGGVNSPVRAAVKPYPFYVERAEGAYLYTADNKQLIDYVLGYGPLILGHANQYVTKKIIEQVNKGWLYGTPSPIEIELARKISHHLPSAQKIRFVNSGTEATMLALRLARAYTGREKIIKFHGNYHGAHDYLLLDAGSAFTEFNVNVYNGIPKSIVNTIRICEYNDAECVEKLSKSEDIAGVIVEPVMGNMGVILPDKDFLERLREITLTYNSVLIFDEVITGFRLGLGGAQGTFNVTPDLTTLGKIIGGGLPIGAVAGKKEIIDMLTPAGKVFNAGTFNANPLTMTAGLATIEVLERENVHEVANRAVNVILEELVNALDKKIPNNFVINHIGSMFQVFFGVKKVSNATEAKLANKEMYQKFHNLLLQRGVFIPPSQFETIFTSYAHKDVVVNTTLEILRKVVQEL.

N6-(pyridoxal phosphate)lysine is present on Lys259.

This sequence belongs to the class-III pyridoxal-phosphate-dependent aminotransferase family. HemL subfamily. Pyridoxal 5'-phosphate serves as cofactor.

The protein resides in the cytoplasm. It catalyses the reaction (S)-4-amino-5-oxopentanoate = 5-aminolevulinate. Its pathway is porphyrin-containing compound metabolism; protoporphyrin-IX biosynthesis; 5-aminolevulinate from L-glutamyl-tRNA(Glu): step 2/2. The protein is Glutamate-1-semialdehyde 2,1-aminomutase of Sulfolobus acidocaldarius (strain ATCC 33909 / DSM 639 / JCM 8929 / NBRC 15157 / NCIMB 11770).